We begin with the raw amino-acid sequence, 504 residues long: ATP synthase subunit alpha (504 aa).

170 to 177 lines the ATP pocket; sequence GDRQTGKT.

This sequence belongs to the ATPase alpha/beta chains family. F-type ATPases have 2 components, CF(1) - the catalytic core - and CF(0) - the membrane proton channel. CF(1) has five subunits: alpha(3), beta(3), gamma(1), delta(1), epsilon(1). CF(0) has four main subunits: a, b, b' and c.

The protein resides in the cellular thylakoid membrane. It carries out the reaction ATP + H2O + 4 H(+)(in) = ADP + phosphate + 5 H(+)(out). Functionally, produces ATP from ADP in the presence of a proton gradient across the membrane. The alpha chain is a regulatory subunit. This chain is ATP synthase subunit alpha, found in Prochlorococcus marinus (strain MIT 9211).